Consider the following 259-residue polypeptide: Pimeloyl-[acyl-carrier protein] methyl ester esterase (259 aa).

Substrate-binding positions include Trp18, 78–79, and 139–143; these read SL and FLALD. The active-site Nucleophile is the Ser78. Catalysis depends on residues Asp203 and His231. Residue His231 participates in substrate binding.

Belongs to the AB hydrolase superfamily. Carboxylesterase BioH family. Monomer.

It is found in the cytoplasm. The enzyme catalyses 6-carboxyhexanoyl-[ACP] methyl ester + H2O = 6-carboxyhexanoyl-[ACP] + methanol + H(+). Its pathway is cofactor biosynthesis; biotin biosynthesis. The physiological role of BioH is to remove the methyl group introduced by BioC when the pimeloyl moiety is complete. It allows to synthesize pimeloyl-ACP via the fatty acid synthetic pathway through the hydrolysis of the ester bonds of pimeloyl-ACP esters. The sequence is that of Pimeloyl-[acyl-carrier protein] methyl ester esterase from Stenotrophomonas maltophilia (strain R551-3).